Reading from the N-terminus, the 472-residue chain is CAAX prenyl protease 1 homolog (472 aa).

Topologically, residues 1–8 (MDVGGALD) are lumenal. Residues 9 to 29 (LYGCSVNVYNAILIFIWVLFL) form a helical membrane-spanning segment. Topologically, residues 30-75 (WETYINLRQLKVAKRVTESPEEIKCLMNDVDFDKSRRYAIDKMNFD) are cytoplasmic. Residues 76–96 (IVSGFYNILSLSAVLYFQLIA) form a helical membrane-spanning segment. Residues 97-124 (WAWHKSQEHMLFVCSYAPRSFGTTEGSE) lie on the Lumenal side of the membrane. The helical transmembrane segment at 125–145 (ILFSLLFTVYVALFQFFESLP) threads the bilayer. Over 146–175 (WSYYRHFVIEERYGFNKQTIGFFIKDRLKS) the chain is Cytoplasmic. Residues 176 to 196 (LAVGLVIGLPIISMLVWIIKA) form a helical membrane-spanning segment. At 197–207 (GGHYFYIYAYG) the chain is on the lumenal side. The chain crosses the membrane as a helical span at residues 208–228 (FTFVVSFIIMFIYPEFIAPIF). Residues 229 to 340 (DRYEHFPDCE…LGHWKLKHMT (112 aa)) lie on the Cytoplasmic side of the membrane. H329 is a binding site for Zn(2+). The active site involves E330. H333 provides a ligand contact to Zn(2+). A helical membrane pass occupies residues 341–361 (FNLIIAQINIFFMFFAFGQLI). Residues 362–382 (NVDQLFVDFGFPPSTAPILIR) are Lumenal-facing. The chain crosses the membrane as a helical span at residues 383-403 (LIVVFQFIFMPYSSVLEFLMT). The Cytoplasmic portion of the chain corresponds to 404-472 (MLSRKFEFQA…AIDAKMGKEK (69 aa)). E410 provides a ligand contact to Zn(2+). The active-site Proton donor is the D414.

Belongs to the peptidase M48A family. Homodimer; disulfide-linked. Zn(2+) is required as a cofactor.

It localises to the endoplasmic reticulum membrane. It carries out the reaction Hydrolyzes the peptide bond -P2-(S-farnesyl or geranylgeranyl)C-P1'-P2'-P3'-COOH where P1' and P2' are amino acids with aliphatic side chains and P3' is any C-terminal residue.. Inhibited by ethylenediaminetetraacetic acid (EDTA) but not by serine, aspartic or cysteine protease inhibitors. Inhibited by high concentration of Zn(2+) (&gt; 0.1 mM). Zinc-dependent metalloproteinase. Proteolytically removes the C-terminal three residues of farnesylated proteins. This chain is CAAX prenyl protease 1 homolog, found in Taenia solium (Pork tapeworm).